A 3259-amino-acid polypeptide reads, in one-letter code: MLSRLSGLANVVLHELSGDDDTDQNMRAPLDPELHQESDMEFNNTTQEDVQERLAYAEQLVVELKDIIRQKDVQLQQKDEALQEERKAADNKIKKLKLHAKAKLTSLNKYIEEMKAQGGTVLPTEPQSEEQLSKHDKSSTEEEMEIEKIKHKLQEKEELISTLQAQLTQAQAEQPAQSSTEMEEFVMMKQQLQEKEEFISTLQAQLSQTQAEQAAQQVVREKDARFETQVRLHEDELLQLVTQADVETEMQQKLRVLQRKLEEHEESLVGRAQVVDLLQQELTAAEQRNQILSQQLQQMEAEHNTLRNTVETEREESKILLEKMELEVAERKLSFHNLQEEMHHLLEQFEQAGQAQAELESRYSALEQKHKAEMEEKTSHILSLQKTGQELQSACDALKDQNSKLLQDKNEQAVQSAQTIQQLEDQLQQKSKEISQFLNRLPLQQHETASQTSFPDVYNEGTQAVTEENIASLQKRVVELENEKGALLLSSIELEELKAENEKLSSQITLLEAQNRTGEADREVSEISIVDIANKRSSSAEESGQDVLENTFSQKHKELSVLLLEMKEAQEEIAFLKLQLQGKRAEEADHEVLDQKEMKQMEGEGIAPIKMKVFLEDTGQDFPLMPNEESSLPAVEKEQASTEHQSRTSEEISLNDAGVELKSTKQDGDKSLSAVPDIGQCHQDELERLKSQILELELNFHKAQEIYEKNLDEKAKEISNLNQLIEEFKKNADNNSSAFTALSEERDQLLSQVKELSMVTELRAQVKQLEMNLAEAERQRRLDYESQTAHDNLLTEQIHSLSIEAKSKDVKIEVLQNELDDVQLQFSEQSTLIRSLQSQLQNKESEVLEGAERVRHISSKVEELSQALSQKELEITKMDQLLLEKKRDVETLQQTIEEKDQQVTEISFSMTEKMVQLNEEKFSLGVEIKTLKEQLNLLSRAEEAKKEQVEEDNEVSSGLKQNYDEMSPAGQISKEELQHEFDLLKKENEQRKRKLQAALINRKELLQRVSRLEEELANLKDESKKEIPLSETERGEVEEDKENKEYSEKCVTSKCQEIEIYLKQTISEKEVELQHIRKDLEEKLAAEEQFQALVKQMNQTLQDKTNQIDLLQAEISENQAIIQKLITSNTDASDGDSVALVKETVVISPPCTGSSEHWKPELEEKILALEKEKEQLQKKLQEALTSRKAILKKAQEKERHLREELKQQKDDYNRLQEQFDEQSKENENIGDQLRQLQIQVRESIDGKLPSTDQQESCSSTPGLEEPLFKATEQHHTQPVLESNLCPDWPSHSEDASALQGGTSVAQIKAQLKEIEAEKVELELKVSSTTSELTKKSEEVFQLQEQINKQGLEIESLKTVSHEAEVHAESLQQKLESSQLQIAGLEHLRELQPKLDELQKLISKKEEDVSYLSGQLSEKEAALTKIQTEIIEQEDLIKALHTQLEMQAKEHDERIKQLQVELCEMKQKPEEIGEESRAKQQIQRKLQAALISRKEALKENKSLQEELSLARGTIERLTKSLADVESQVSAQNKEKDTVLGRLALLQEERDKLITEMDRSLLENQSLSSSCESLKLALEGLTEDKEKLVKEIESLKSSKIAESTEWQEKHKELQKEYEILLQSYENVSNEAERIQHVVEAVRQEKQELYGKLRSTEANKKETEKQLQEAEQEMEEMKEKMRKFAKSKQQKILELEEENDRLRAEVHPAGDTAKECMETLLSSNASMKEELERVKMEYETLSKKFQSLMSEKDSLSEEVQDLKHQIEGNVSKQANLEATEKHDNQTNVTEEGTQSIPGETEEQDSLSMSTRPTCSESVPSAKSANPAVSKDFSSHDEINNYLQQIDQLKERIAGLEEEKQKNKEFSQTLENEKNTLLSQISTKDGELKMLQEEVTKMNLLNQQIQEELSRVTKLKETAEEEKDDLEERLMNQLAELNGSIGNYCQDVTDAQIKNELLESEMKNLKKCVSELEEEKQQLVKEKTKVESEIRKEYLEKIQGAQKEPGNKSHAKELQELLKEKQQEVKQLQKDCIRYQEKISALERTVKALEFVQTESQKDLEITKENLAQAVEHRKKAQAELASFKVLLDDTQSEAARVLADNLKLKKELQSNKESVKSQMKQKDEDLERRLEQAEEKHLKEKKNMQEKLDALRREKVHLEETIGEIQVTLNKKDKEVQQLQENLDSTVTQLAAFTKSMSSLQDDRDRVIDEAKKWERKFSDAIQSKEEEIRLKEDNCSVLKDQLRQMSIHMEELKINISRLEHDKQIWESKAQTEVQLQQKVCDTLQGENKELLSQLEETRHLYHSSQNELAKLESELKSLKDQLTDLSNSLEKCKEQKGNLEGIIRQQEADIQNSKFSYEQLETDLQASRELTSRLHEEINMKEQKIISLLSGKEEAIQVAIAELRQQHDKEIKELENLLSQEEEENIVLEEENKKAVDKTNQLMETLKTIKKENIQQKAQLDSFVKSMSSLQNDRDRIVGDYQQLEERHLSIILEKDQLIQEAAAENNKLKEEIRGLRSHMDDLNSENAKLDAELIQYREDLNQVITIKDSQQKQLLEVQLQQNKELENKYAKLEEKLKESEEANEDLRRSFNALQEEKQDLSKEIESLKVSISQLTRQVTALQEEGTLGLYHAQLKVKEEEVHRLSALFSSSQKRIAELEEELVCVQKEAAKKVGEIEDKLKKELKHLHHDAGIMRNETETAEERVAELARDLVEMEQKLLMVTKENKGLTAQIQSFGRSMSSLQNSRDHANEELDELKRKYDASLKELAQLKEQGLLNRERDALLSETAFSMNSTEENSLSHLEKLNQQLLSKDEQLLHLSSQLEDSYNQVQSFSKAMASLQNERDHLWNELEKFRKSEEGKQRSAAQPSTSPAEVQSLKKAMSSLQNDRDRLLKELKNLQQQYLQINQEITELHPLKAQLQEYQDKTKAFQIMQEELRQENLSWQHELHQLRMEKSSWEIHERRMKEQYLMAISDKDQQLSHLQNLIRELRSSSSQTQPLKVQYQRQASPETSASPDGSQNLVYETELLRTQLNDSLKEIHQKELRIQQLNSNFSQLLEEKNTLSIQLCDTSQSLRENQQHYGDLLNHCAVLEKQVQELQAGPLNIDVAPGAPQEKNGVHRKSDPEELREPQQSFSEAQQQLCNTRQEVNELRKLLEEERDQRVAAENALSVAEEQIRRLEHSEWDSSRTPIIGSCGTQEQALLIDLTSNSCRRTRSGVGWKRVLRSLCHSRTRVPLLAAIYFLMIHVLLILCFTGHL.

An N-acetylmethionine modification is found at Met-1. Residues 1 to 3235 lie on the Cytoplasmic side of the membrane; the sequence is MLSRLSGLAN…LRSLCHSRTR (3235 aa). Ser-6, Ser-17, Ser-138, and Ser-528 each carry phosphoserine. Residues 48 to 593 adopt a coiled-coil conformation; the sequence is EDVQERLAYA…RAEEADHEVL (546 aa). Positions 119-142 are disordered; the sequence is GTVLPTEPQSEEQLSKHDKSSTEE. Residues 131-142 show a composition bias toward basic and acidic residues; that stretch reads QLSKHDKSSTEE. The segment at 624–652 is disordered; it reads LMPNEESSLPAVEKEQASTEHQSRTSEEI. The span at 635 to 650 shows a compositional bias: basic and acidic residues; the sequence is VEKEQASTEHQSRTSE. Phosphoserine is present on Ser-653. Coiled-coil stretches lie at residues 677-1028, 1062-1245, and 1301-1779; these read DIGQ…KEIP, LKQT…ESID, and GTSV…TEKH. The interval 944–963 is disordered; sequence AKKEQVEEDNEVSSGLKQNY. The segment covering 1747–1763 has biased composition (basic and acidic residues); it reads SEKDSLSEEVQDLKHQI. Residues 1747–1829 form a disordered region; sequence SEKDSLSEEV…SANPAVSKDF (83 aa). 2 stretches are compositionally biased toward polar residues: residues 1782–1794 and 1802–1820; these read QTNVTEEGTQSIP and SLSMSTRPTCSESVPSAKS. A coiled-coil region spans residues 1828-3185; it reads DFSSHDEINN…EQIRRLEHSE (1358 aa). Phosphoserine is present on residues Ser-2216, Ser-2735, Ser-2872, and Ser-2884. Residues 2856 to 2876 form a disordered region; that stretch reads RKSEEGKQRSAAQPSTSPAEV. Residues 2865 to 2875 are compositionally biased toward polar residues; the sequence is SAAQPSTSPAE. Residues 2998–3021 form a disordered region; sequence TQPLKVQYQRQASPETSASPDGSQ. Ser-3037 is subject to Phosphoserine. The segment at 3107–3140 is disordered; it reads IDVAPGAPQEKNGVHRKSDPEELREPQQSFSEAQ. Residues 3118–3131 show a composition bias toward basic and acidic residues; it reads NGVHRKSDPEELRE. A helical membrane pass occupies residues 3236–3256; that stretch reads VPLLAAIYFLMIHVLLILCFT. Over 3257–3259 the chain is Lumenal; it reads GHL.

In terms of assembly, homodimer; disulfide-linked. Interacts with PLK3.

It localises to the golgi apparatus membrane. Functionally, may participate in forming intercisternal cross-bridges of the Golgi complex. This Homo sapiens (Human) protein is Golgin subfamily B member 1 (GOLGB1).